The sequence spans 167 residues: UPF0598 protein CG30010 (167 aa).

The protein belongs to the UPF0598 family.

The sequence is that of UPF0598 protein CG30010 from Drosophila melanogaster (Fruit fly).